The following is a 784-amino-acid chain: LPS-assembly protein LptD (784 aa).

The first 24 residues, 1-24 (MKKRIPTLLATMIATALYSQQGLA), serve as a signal peptide directing secretion. Cystine bridges form between Cys-31–Cys-724 and Cys-173–Cys-725.

It belongs to the LptD family. Component of the lipopolysaccharide transport and assembly complex. Interacts with LptE and LptA. Contains two intramolecular disulfide bonds.

It is found in the cell outer membrane. Together with LptE, is involved in the assembly of lipopolysaccharide (LPS) at the surface of the outer membrane. The protein is LPS-assembly protein LptD of Shigella flexneri.